The following is a 387-amino-acid chain: S-adenosylmethionine synthase (387 aa).

His16 contributes to the ATP binding site. Asp18 contacts Mg(2+). Glu44 is a K(+) binding site. 2 residues coordinate L-methionine: Glu57 and Gln100. The interval 100 to 110 (QSPDIAQGVDR) is flexible loop. ATP contacts are provided by residues 167–169 (DAK), 232–233 (RF), Asp241, 247–248 (RK), Ala264, and Lys268. Asp241 contributes to the L-methionine binding site. Lys272 is a binding site for L-methionine.

Belongs to the AdoMet synthase family. As to quaternary structure, homotetramer; dimer of dimers. Requires Mg(2+) as cofactor. K(+) is required as a cofactor.

Its subcellular location is the cytoplasm. The enzyme catalyses L-methionine + ATP + H2O = S-adenosyl-L-methionine + phosphate + diphosphate. The protein operates within amino-acid biosynthesis; S-adenosyl-L-methionine biosynthesis; S-adenosyl-L-methionine from L-methionine: step 1/1. In terms of biological role, catalyzes the formation of S-adenosylmethionine (AdoMet) from methionine and ATP. The overall synthetic reaction is composed of two sequential steps, AdoMet formation and the subsequent tripolyphosphate hydrolysis which occurs prior to release of AdoMet from the enzyme. This Cupriavidus pinatubonensis (strain JMP 134 / LMG 1197) (Cupriavidus necator (strain JMP 134)) protein is S-adenosylmethionine synthase.